Here is a 67-residue protein sequence, read N- to C-terminus: UPF0253 protein VS_2370 (67 aa).

The protein belongs to the UPF0253 family.

The protein is UPF0253 protein VS_2370 of Vibrio atlanticus (strain LGP32) (Vibrio splendidus (strain Mel32)).